The primary structure comprises 218 residues: Thiopurine S-methyltransferase (218 aa).

S-adenosyl-L-methionine-binding residues include W10, L45, E66, and R123.

Belongs to the class I-like SAM-binding methyltransferase superfamily. TPMT family.

Its subcellular location is the cytoplasm. The enzyme catalyses S-adenosyl-L-methionine + a thiopurine = S-adenosyl-L-homocysteine + a thiopurine S-methylether.. This chain is Thiopurine S-methyltransferase, found in Azotobacter vinelandii (strain DJ / ATCC BAA-1303).